The following is a 332-amino-acid chain: Glycerol-3-phosphate dehydrogenase [NAD(P)+] (332 aa).

NADPH-binding residues include W11, R30, and K108. 3 residues coordinate sn-glycerol 3-phosphate: K108, G137, and S139. A141 lines the NADPH pocket. Positions 192, 245, 255, 256, and 257 each coordinate sn-glycerol 3-phosphate. Catalysis depends on K192, which acts as the Proton acceptor. R256 is a binding site for NADPH. NADPH-binding residues include V280 and E282.

Belongs to the NAD-dependent glycerol-3-phosphate dehydrogenase family.

It localises to the cytoplasm. The catalysed reaction is sn-glycerol 3-phosphate + NAD(+) = dihydroxyacetone phosphate + NADH + H(+). The enzyme catalyses sn-glycerol 3-phosphate + NADP(+) = dihydroxyacetone phosphate + NADPH + H(+). It functions in the pathway membrane lipid metabolism; glycerophospholipid metabolism. In terms of biological role, catalyzes the reduction of the glycolytic intermediate dihydroxyacetone phosphate (DHAP) to sn-glycerol 3-phosphate (G3P), the key precursor for phospholipid synthesis. In Burkholderia orbicola (strain MC0-3), this protein is Glycerol-3-phosphate dehydrogenase [NAD(P)+].